The sequence spans 160 residues: Transcription antitermination protein NusB (160 aa).

It belongs to the NusB family.

In terms of biological role, involved in transcription antitermination. Required for transcription of ribosomal RNA (rRNA) genes. Binds specifically to the boxA antiterminator sequence of the ribosomal RNA (rrn) operons. The chain is Transcription antitermination protein NusB from Rhizobium johnstonii (strain DSM 114642 / LMG 32736 / 3841) (Rhizobium leguminosarum bv. viciae).